Consider the following 255-residue polypeptide: uncharacterized protein (255 aa).

The J domain maps to 4 to 72 (DPYSVLGVEK…KRRKHYDKTG (69 aa)). Composition is skewed to basic residues over residues 167–178 (FAPNEKKRKRRA) and 243–255 (TKPKKSKKSRSKE). Disordered stretches follow at residues 167-215 (FAPN…EEAL) and 230-255 (LISNLESKYSKSSTKPKKSKKSRSKE).

This sequence belongs to the DnaJ family.

It localises to the nucleus. The protein resides in the nucleolus. This is an uncharacterized protein from Schizosaccharomyces pombe (strain 972 / ATCC 24843) (Fission yeast).